A 1585-amino-acid chain; its full sequence is Adhesion G protein-coupled receptor B2 (1585 aa).

The signal sequence occupies residues 1–32; sequence MENTGWMGKGHRMTPACPLLLSVILSLRLATA. Residues 33–936 are Extracellular-facing; it reads FDPAPSACSA…ELAGSPSVPL (904 aa). 3 N-linked (GlcNAc...) asparagine glycosylation sites follow: Asn-106, Asn-191, and Asn-192. Positions 229-238 are enriched in low complexity; the sequence is AGAGSTTTTS. The disordered stretch occupies residues 229-271; it reads AGAGSTTTTSPGPPAAHTLSNALVPGGPAPPAEADLHSGSSND. A glycan (O-linked (Xyl...) (chondroitin sulfate) serine) is linked at Ser-266. TSP type-1 domains are found at residues 309-362, 364-417, 419-472, and 475-528; these read DPAA…ATCP, HGVW…AACP, EGQW…LECP, and DSKW…KRCP. Disulfide bonds link Cys-321/Cys-355, Cys-325/Cys-361, Cys-336/Cys-345, Cys-376/Cys-411, Cys-380/Cys-416, Cys-391/Cys-401, Cys-431/Cys-466, Cys-435/Cys-471, Cys-446/Cys-456, Cys-487/Cys-522, Cys-491/Cys-527, Cys-502/Cys-512, Cys-534/Cys-569, and Cys-557/Cys-587. An N-linked (GlcNAc...) asparagine glycan is attached at Asn-356. N-linked (GlcNAc...) asparagine glycosylation occurs at Asn-437. N-linked (GlcNAc...) asparagine glycans are attached at residues Asn-560 and Asn-645. In terms of domain architecture, GAIN-B spans 757–924; the sequence is DRLFLPKEVL…AVLAQPPKDL (168 aa). Residues 767–806 form a disordered region; the sequence is SLSSPGKPATSGAAGSPGRGRGPGTVPPGPGHSHQRLLPA. A compositionally biased stretch (low complexity) spans 769-780; the sequence is SSPGKPATSGAA. Residue Asn-867 is glycosylated (N-linked (GlcNAc...) asparagine). 2 disulfide bridges follow: Cys-874–Cys-906 and Cys-894–Cys-908. Residues 874–924 form a GPS region; the sequence is CASWDYSRADASSGDWDTENCQTLETQAAHTRCQCQHLSTFAVLAQPPKDL. Residues 937-957 form a helical membrane-spanning segment; sequence VIGCAVSCMALLTLLAIYAAF. The Cytoplasmic portion of the chain corresponds to 958-965; it reads WRFIKSER. Residues 966–986 traverse the membrane as a helical segment; that stretch reads SIILLNFCLSILASNILILVG. Topologically, residues 987–994 are extracellular; sequence QSRVLSKG. A helical transmembrane segment spans residues 995–1015; sequence VCTMTAAFLHFFFLSSFCWVL. Topologically, residues 1016-1036 are cytoplasmic; sequence TEAWQSYLAVIGRMRTRLVRK. Residues 1037-1057 traverse the membrane as a helical segment; it reads RFLCLGWGLPALVVAVSVGFT. At 1058-1078 the chain is on the extracellular side; sequence RTKGYGTSSYCWLSLEGGLLY. The chain crosses the membrane as a helical span at residues 1079–1099; sequence AFVGPAAVIVLVNMLIGIIVF. Over 1100 to 1121 the chain is Cytoplasmic; sequence NKLMARDGISDKSKKQRAGSER. Residues 1122–1142 form a helical membrane-spanning segment; sequence CPWASLLLPCSACGAVPSPLL. Residues 1143 to 1153 are Extracellular-facing; sequence SSASARNAMAS. The chain crosses the membrane as a helical span at residues 1154–1174; it reads LWSSCVVLPLLALTWMSAVLA. Topologically, residues 1175-1585 are cytoplasmic; sequence MTDRRSVLFQ…PPDGDFQTEV (411 aa). The residue at position 1351 (Tyr-1351) is a Phosphotyrosine. Disordered regions lie at residues 1359–1385, 1423–1454, and 1498–1585; these read LSLQ…PRRA, FQPP…GSTM, and YRSQ…QTEV. A compositionally biased stretch (basic and acidic residues) spans 1372–1382; that stretch reads DAPRARPEGTP. The segment covering 1543–1552 has biased composition (polar residues); that stretch reads SWSTFKSMTL. A compositionally biased stretch (acidic residues) spans 1575-1585; sequence EPPDGDFQTEV.

It belongs to the G-protein coupled receptor 2 family. Adhesion G-protein coupled receptor (ADGR) subfamily. As to quaternary structure, heterodimer of 2 chains generated by proteolytic processing; the large extracellular N-terminal fragment and the membrane-bound C-terminal fragment predominantly remain associated and non-covalently linked. Interacts with GABPB2. Interacts (via carboxy-terminus) with TAX1BP3. Interacts with GNAZ. Interacts with SH3GL2. Glycosylated. In terms of processing, autoproteolytically processed at the GPS region of the GAIN-B domain; this cleavage modulates receptor activity. Additionally, furin is involved in the cleavage at another site, in the middle of the extracellular domain, generating a soluble fragment. In terms of tissue distribution, detected in cerebrospinal fluid (at protein level). Strongly expressed in brain. Also detected in heart, thymus, skeletal muscle, and different cell lines.

The protein localises to the cell membrane. It localises to the secreted. With respect to regulation, receptor activity is regulated by proteolytic processing. The long N-terminal has a an inhibitory effect on the constitutive signaling activity. Removal of the N-terminal region induces an increase of the receptor activity. Functionally, orphan G-protein coupled receptor involved in cell adhesion and probably in cell-cell interactions. Activates NFAT-signaling pathway, a transcription factor, via the G-protein GNAZ. Involved in angiogenesis inhibition. The sequence is that of Adhesion G protein-coupled receptor B2 from Homo sapiens (Human).